The following is a 292-amino-acid chain: MKYSLGPVLWYWPKETLEEFYQQAATSSADVIYLGEAVCSKRRATKVGDWLEMAKSLAGSGKQIVLSTLALVQASSELGELKRYVENGEFLIEASDLGVVNMCAERKLPFVAGHALNCYNAVTLKILLKQGMMRWCMPVELSRDWLVNLLNQCDELGIRNQFEVEVLSYGHLPLAYSARCFTARSEDRPKDECETCCIKYPNGRNVLSQENQQVFVLNGIQTMSGYVYNLGNELASMQGLVDVVRLSPQGTDTFAMLDAFRANENGAAPLPLTANSDCNGYWRRLAGLELQA.

The [4Fe-4S] cluster site is built by cysteine 39, cysteine 180, cysteine 193, and cysteine 197.

The protein belongs to the peptidase U32 family. UbiV subfamily. As to quaternary structure, forms a heterodimer with UbiU. [4Fe-4S] cluster serves as cofactor.

The protein operates within cofactor biosynthesis; ubiquinone biosynthesis. Its function is as follows. Required for O(2)-independent ubiquinone (coenzyme Q) biosynthesis. Together with UbiU, is essential for the C6-hydroxylation reaction in the oxygen-independent ubiquinone biosynthesis pathway. This chain is Ubiquinone biosynthesis protein UbiV, found in Escherichia coli (strain K12).